The primary structure comprises 261 residues: Small ribosomal subunit protein mS23 (261 aa).

The disordered stretch occupies residues 234–261 (NPSESWATDEKDPKKNDDIEEDVEEIKL). Positions 241–250 (TDEKDPKKND) are enriched in basic and acidic residues. The segment covering 251-261 (DIEEDVEEIKL) has biased composition (acidic residues).

This sequence belongs to the mitochondrion-specific ribosomal protein mS23 family. Component of the mitochondrial small ribosomal subunit.

Its subcellular location is the mitochondrion. This is Small ribosomal subunit protein mS23 (RSM25) from Vanderwaltozyma polyspora (strain ATCC 22028 / DSM 70294 / BCRC 21397 / CBS 2163 / NBRC 10782 / NRRL Y-8283 / UCD 57-17) (Kluyveromyces polysporus).